Here is a 229-residue protein sequence, read N- to C-terminus: Putative N-acetylmannosamine-6-phosphate 2-epimerase (229 aa).

The protein belongs to the NanE family.

It carries out the reaction an N-acyl-D-glucosamine 6-phosphate = an N-acyl-D-mannosamine 6-phosphate. It functions in the pathway amino-sugar metabolism; N-acetylneuraminate degradation; D-fructose 6-phosphate from N-acetylneuraminate: step 3/5. Its function is as follows. Converts N-acetylmannosamine-6-phosphate (ManNAc-6-P) to N-acetylglucosamine-6-phosphate (GlcNAc-6-P). The protein is Putative N-acetylmannosamine-6-phosphate 2-epimerase of Haemophilus ducreyi (strain 35000HP / ATCC 700724).